We begin with the raw amino-acid sequence, 377 residues long: Phospho-N-acetylmuramoyl-pentapeptide-transferase (377 aa).

Helical transmembrane passes span 2 to 22 (IQLL…TPAL), 55 to 75 (VAIL…SVLA), 82 to 102 (ITLS…VGFL), 122 to 142 (MVLQ…FPDA), 162 to 182 (LAFA…NLIA), 195 to 215 (LDGL…LITL), 236 to 256 (PMDL…FLWW), 263 to 283 (IFMG…FAVL), 288 to 308 (LLLV…ILQV), and 343 to 363 (FWVI…GDWL).

Belongs to the glycosyltransferase 4 family. MraY subfamily. Requires Mg(2+) as cofactor.

It is found in the cell membrane. It carries out the reaction UDP-N-acetyl-alpha-D-muramoyl-L-alanyl-gamma-D-glutamyl-meso-2,6-diaminopimeloyl-D-alanyl-D-alanine + di-trans,octa-cis-undecaprenyl phosphate = di-trans,octa-cis-undecaprenyl diphospho-N-acetyl-alpha-D-muramoyl-L-alanyl-D-glutamyl-meso-2,6-diaminopimeloyl-D-alanyl-D-alanine + UMP. It functions in the pathway cell wall biogenesis; peptidoglycan biosynthesis. Its function is as follows. Catalyzes the initial step of the lipid cycle reactions in the biosynthesis of the cell wall peptidoglycan: transfers peptidoglycan precursor phospho-MurNAc-pentapeptide from UDP-MurNAc-pentapeptide onto the lipid carrier undecaprenyl phosphate, yielding undecaprenyl-pyrophosphoryl-MurNAc-pentapeptide, known as lipid I. The sequence is that of Phospho-N-acetylmuramoyl-pentapeptide-transferase from Kocuria rhizophila (strain ATCC 9341 / DSM 348 / NBRC 103217 / DC2201).